The primary structure comprises 192 residues: UPF0149 protein YgfB (192 aa).

It belongs to the UPF0149 family.

In Salmonella agona (strain SL483), this protein is UPF0149 protein YgfB.